Reading from the N-terminus, the 468-residue chain is UDP-N-acetylmuramoyl-L-alanine--L-glutamate ligase (468 aa).

122 to 128 provides a ligand contact to ATP; the sequence is GTKGKST.

It belongs to the MurCDEF family. MurD2 subfamily.

The protein localises to the cytoplasm. The enzyme catalyses UDP-N-acetyl-alpha-D-muramoyl-L-alanine + L-glutamate + ATP = UDP-N-acetyl-alpha-D-muramoyl-L-alanyl-L-glutamate + ADP + phosphate + H(+). It participates in cell wall biogenesis; peptidoglycan biosynthesis. Cell wall formation. Catalyzes the addition of L-glutamate to the nucleotide precursor UDP-N-acetylmuramoyl-L-alanine. In Xylella fastidiosa (strain 9a5c), this protein is UDP-N-acetylmuramoyl-L-alanine--L-glutamate ligase.